We begin with the raw amino-acid sequence, 178 residues long: Putative magnesium-dependent phosphatase YER134C (178 aa).

Residue Asp-11 is the Nucleophile of the active site. Mg(2+) is bound at residue Asp-11. Residues Leu-12, Asp-13, Ser-74, and Arg-75 each contribute to the phosphate site. Mg(2+) is bound at residue Asp-13. The active-site Proton donor is the Asp-13. Position 75 (Arg-75) interacts with substrate. Asp-141 lines the Mg(2+) pocket.

The protein belongs to the HAD-like hydrolase superfamily.

Its subcellular location is the cytoplasm. It is found in the nucleus. It carries out the reaction O-phospho-L-tyrosyl-[protein] + H2O = L-tyrosyl-[protein] + phosphate. Magnesium-dependent phosphatase which may act as a tyrosine phosphatase. In Saccharomyces cerevisiae (strain ATCC 204508 / S288c) (Baker's yeast), this protein is Putative magnesium-dependent phosphatase YER134C.